Here is a 1061-residue protein sequence, read N- to C-terminus: MFFVYRSNQIDILFTKICKIIKKKPLLNIFEREIIIHDNEILFQNLNTFIANHTGIAADFKLIYPNVFIWKLFKQVFSDIQLNNIFSRSTITWKIMKIIEENDFCKFVQKKDKIMKKFEFSFLMSHLYQQYILYRPNWINMWEKNKKNTLKIEKKDEWQAKLWIKIILYTEKLQQSKWHFSNLFKKFKTLKKIEHIKFPKRIFIIYSISLNPKYMEIFKKISTYTDIYFLSINACEKKIFHISFAKNYVVQKNNLLMNLSEKYEKFYFLFFKKFKKIKYNNFFQKNNSNNLLNIVKNDFLNFKEKENLLKKNSFLLKDNSISINICCDKKHEIEVLYNKLLSFFNEDSKLKPSDIVITSFSLNTYIIYINSIFKSKNKKEKIPFYISKKHSDKIEKILFIFNKILNLPNIRCNNEEILDLIEIQDIRDKFDISEEEINILYEWIEKANIRWGLHENEKQKNNLIFIKKNQNTWFYGIKKLLISHAINEEEEVWNNVLSCTSINTSRTELIGKLINFIKVLDQWRDKLFFSKKIKSWRPLFLCFIKDFFYKNEKIRDSIDIINKTWTKMIDDATLSNYEKKIPISILKKKFSHIMNNFSEKKFLPGVINFCHPSLVCYIPFKIKCIIGAEYQEIPKKKLSSFNLIDKYPLTSDLHICKENYIFLQNFISTQETLYISYVGHSLKNNNKVRSSILIDQLLNHITSNFYVSEHHDYKNNKKEIFEHICKKHKKENLYEKKQVNKINLNTLQKTKKINQEIYNKIFSIKNRIISTSTQISLKSLISFWKNPIRYFFNYTLNIKLKIAKRNIITEPFSINLFDDFKISNIIFKKILNNESIKDEFKKIILSGILPYGHFGSILLKEKKKEIENIVKAIYKYRISSPKKENFDIKIEKYNINGCLDEIQNTGLLRWKLGTINYRDRISLWLEHLIYCILGGTGESKIIGYKKNFFSFYPLSSHLAYNYLFTYIEGYMKGMKNPLLLIKSGSNWFDKVYDKKNDCIKKNDDIKRKAYKILYHTWMGNEYITGEKEDLYIQQIISELNVKKICKISQKWFTPILKHQKK.

Belongs to the RecC family. Heterotrimer of RecB, RecC and RecD. All subunits contribute to DNA-binding.

A helicase/nuclease that prepares dsDNA breaks (DSB) for recombinational DNA repair. Binds to DSBs and unwinds DNA via a highly rapid and processive ATP-dependent bidirectional helicase activity. Unwinds dsDNA until it encounters a Chi (crossover hotspot instigator) sequence from the 3' direction. Cuts ssDNA a few nucleotides 3' to the Chi site. The properties and activities of the enzyme are changed at Chi. The Chi-altered holoenzyme produces a long 3'-ssDNA overhang and facilitates RecA-binding to the ssDNA for homologous DNA recombination and repair. Holoenzyme degrades any linearized DNA that is unable to undergo homologous recombination. In the holoenzyme this subunit recognizes the wild-type Chi sequence, and when added to isolated RecB increases its ATP-dependent helicase processivity. The chain is RecBCD enzyme subunit RecC from Buchnera aphidicola subsp. Schizaphis graminum (strain Sg).